Consider the following 259-residue polypeptide: Ribonuclease PH (259 aa).

Residues R88 and 126-128 (GTR) contribute to the phosphate site.

Belongs to the RNase PH family. In terms of assembly, homohexameric ring arranged as a trimer of dimers.

It catalyses the reaction tRNA(n+1) + phosphate = tRNA(n) + a ribonucleoside 5'-diphosphate. Its function is as follows. Phosphorolytic 3'-5' exoribonuclease that plays an important role in tRNA 3'-end maturation. Removes nucleotide residues following the 3'-CCA terminus of tRNAs; can also add nucleotides to the ends of RNA molecules by using nucleoside diphosphates as substrates, but this may not be physiologically important. Probably plays a role in initiation of 16S rRNA degradation (leading to ribosome degradation) during starvation. This Mycobacterium leprae (strain Br4923) protein is Ribonuclease PH.